The sequence spans 515 residues: Integrator complex subunit 14 (515 aa).

The region spanning 2 to 204 is the VWFA domain; sequence PTVVVMDVSL…KNVQSMFGKL (203 aa). Mg(2+) contacts are provided by serine 10, serine 12, and threonine 86. Lysine 418 is modified (N6-acetyllysine).

Belongs to the Integrator subunit 14 family. In terms of assembly, component of the Integrator complex, composed of core subunits INTS1, INTS2, INTS3, INTS4, INTS5, INTS6, INTS7, INTS8, INTS9/RC74, INTS10, INTS11/CPSF3L, INTS12, INTS13, INTS14 and INTS15. The core complex associates with protein phosphatase 2A subunits PPP2CA and PPP2R1A, to form the Integrator-PP2A (INTAC) complex. INTS14 is part of the tail subcomplex, composed of INTS10, INTS13, INTS14 and INTS15.

The protein localises to the nucleus. Functionally, component of the integrator complex, a multiprotein complex that terminates RNA polymerase II (Pol II) transcription in the promoter-proximal region of genes. The integrator complex provides a quality checkpoint during transcription elongation by driving premature transcription termination of transcripts that are unfavorably configured for transcriptional elongation: the complex terminates transcription by (1) catalyzing dephosphorylation of the C-terminal domain (CTD) of Pol II subunit POLR2A/RPB1 and SUPT5H/SPT5, (2) degrading the exiting nascent RNA transcript via endonuclease activity and (3) promoting the release of Pol II from bound DNA. The integrator complex is also involved in terminating the synthesis of non-coding Pol II transcripts, such as enhancer RNAs (eRNAs), small nuclear RNAs (snRNAs), telomerase RNAs and long non-coding RNAs (lncRNAs). Within the integrator complex, INTS14 is part of the integrator tail module that acts as a platform for the recruitment of transcription factors at promoters. The protein is Integrator complex subunit 14 of Mus musculus (Mouse).